The following is an 895-amino-acid chain: Transcription factor SWI6 (895 aa).

Residues 1–45 (MASTVAGNSFVSQQHPGNLHSANLQSQSQGFRRQNSTSSVPSTAS) are compositionally biased toward polar residues. The tract at residues 1–107 (MASTVAGNSF…SDQNVPQQPQ (107 aa)) is disordered. A compositionally biased stretch (low complexity) spans 64 to 100 (MSSQQSQPPASQQSFSMSQTGSQPQPSQSSFRSYSDQ). The 108-residue stretch at 112-219 (IYTAVYSNVE…NRNPDGSVSQ (108 aa)) folds into the HTH APSES-type domain. The segment at residues 143 to 164 (ATQILKVAGVEKGKRTKILEKE) is a DNA-binding region (H-T-H motif). 2 disordered regions span residues 272–293 (ARFD…SFQR) and 323–358 (NMAF…NSFG). 2 ANK repeats span residues 458–488 (QCHT…PFRV) and 607–636 (AGDT…SPHI). The segment at 653–684 (SDGAMKTKGDSGGDVENGDVGGSSQKSNESSN) is disordered. The segment covering 674–684 (GSSQKSNESSN) has biased composition (polar residues). Residues 698–759 (SANFQEEIKN…VTNLQRAEER (62 aa)) are a coiled coil.

It is found in the nucleus. Transcription factor that plays a role downstream of the MCK1-MKK2-MPS1 cascade. Required for hyphal morphogenesis and pathogenicity. Is an important oxidative stress response regulator and plays a positive role in the regulation of extracellular peroxidases. This Pyricularia oryzae (strain 70-15 / ATCC MYA-4617 / FGSC 8958) (Rice blast fungus) protein is Transcription factor SWI6.